An 87-amino-acid polypeptide reads, in one-letter code: Beta-toxin Cn4 (87 aa).

Positions 1–19 (MNSLLMITACLALVGTVWA) are cleaved as a signal peptide. Residues 20-85 (KEGYLVNSYT…VWPLKNKTCN (66 aa)) enclose the LCN-type CS-alpha/beta domain. Intrachain disulfides connect Cys-31/Cys-84, Cys-35/Cys-60, Cys-44/Cys-65, and Cys-48/Cys-67. Asn-85 bears the Asparagine amide mark.

This sequence belongs to the long (4 C-C) scorpion toxin superfamily. Sodium channel inhibitor family. Beta subfamily. In terms of tissue distribution, expressed by the venom gland.

It localises to the secreted. Its function is as follows. Beta toxins bind voltage-independently at site-4 of sodium channels (Nav) and shift the voltage of activation toward more negative potentials thereby affecting sodium channel activation and promoting spontaneous and repetitive firing. This toxin affects the activation mechanism of sodium channels of squid axon. It also competes with Cn2 in rat brain synaptosomes. Is lethal to mice. The protein is Beta-toxin Cn4 of Centruroides noxius (Mexican scorpion).